Consider the following 821-residue polypeptide: Centrosomal protein of 95 kDa (821 aa).

Disordered regions lie at residues 310 to 354, 390 to 474, and 514 to 550; these read TLCK…FPQK, ATGE…DTHH, and KEAF…SSKA. Basic and acidic residues-rich tracts occupy residues 325-340 and 390-410; these read ESSK…RSEN and ATGE…HSAN. Residues 427–441 are compositionally biased toward basic residues; the sequence is RKPRPGFSMHRKAPY. 3 positions are modified to phosphoserine: S445, S447, and S449. 2 coiled-coil regions span residues 578–627 and 695–789; these read LTKM…VKKE and LQIQ…DDDA.

The protein resides in the cytoplasm. It localises to the cytoskeleton. It is found in the microtubule organizing center. The protein localises to the centrosome. Its subcellular location is the spindle pole. The polypeptide is Centrosomal protein of 95 kDa (Cep95) (Rattus norvegicus (Rat)).